A 303-amino-acid chain; its full sequence is Probable endonuclease 4 (303 aa).

Zn(2+) is bound by residues His-75, His-115, Glu-151, Asp-185, His-188, His-221, Asp-234, His-236, and Glu-266.

The protein belongs to the AP endonuclease 2 family. Zn(2+) is required as a cofactor.

The enzyme catalyses Endonucleolytic cleavage to 5'-phosphooligonucleotide end-products.. Functionally, endonuclease IV plays a role in DNA repair. It cleaves phosphodiester bonds at apurinic or apyrimidinic (AP) sites, generating a 3'-hydroxyl group and a 5'-terminal sugar phosphate. The chain is Probable endonuclease 4 from Ureaplasma parvum serovar 3 (strain ATCC 700970).